Here is a 629-residue protein sequence, read N- to C-terminus: MLMEIRESVKERIEEIIKEIAPQWEGEIELKETPDPKLGDFGTPIAFKLAKLLKRPPIEIAEKIVEKLKLNLPEGIKDVKAVNGYINVFIDYPHFARILINDILAKGDRFGSSEIGKGKKVIVEHTSVNPTKPLHMGHARNAILGDVMARILRFLGYEVEVQNYIDDLGIQFAQVYWGYLRLKEEFERIMNELRERGLKDNPIDHALGLLYVEVNRRLEDNPELENEIRDIMKKLESGELYGRKLAEEVVRAQMVTTYKLGVKYDLLVWESDIVRRKLFEIALELLSKNENFYIPSDGKYRGAFVMDLRKLFPDMKNPILVLRRSDGTATYTGKDIAYHLWKFGKIDVDLLYKEWDSTTWTTAPDGKSMPNKFGNANIVINVIGAEQKHPQLAIKYALQLLGFEDAAANLYHLAYEHVERPEGKFSGRKGTWVGFTVDEVIQEAVKRARELIEEKNPALSDEEKAEVAEKVGIGAIRYNLIKYSPDKKIIFRWEDVLNFEGESAPYIQYAHARCSSILRKAEEEGIKVDPETLFKNADFTKLSERERELVIMLSKFPRIVEQAGKDVKPHLIAWFANELASLFNKFYMDHPVLKAEEGVREARLLLVMAVEQVLKNALYLMGIEAPERM.

Positions 128–138 (VNPTKPLHMGH) match the 'HIGH' region motif.

Belongs to the class-I aminoacyl-tRNA synthetase family.

It localises to the cytoplasm. The enzyme catalyses tRNA(Arg) + L-arginine + ATP = L-arginyl-tRNA(Arg) + AMP + diphosphate. The sequence is that of Arginine--tRNA ligase (argS) from Pyrococcus horikoshii (strain ATCC 700860 / DSM 12428 / JCM 9974 / NBRC 100139 / OT-3).